Reading from the N-terminus, the 230-residue chain is Ribonuclease 3 (230 aa).

The RNase III domain maps to 5–134; it reads EALLKSSFAI…FLGALLLDKG (130 aa). Glutamate 47 contributes to the Mg(2+) binding site. The active site involves aspartate 51. Aspartate 120 and glutamate 123 together coordinate Mg(2+). Glutamate 123 is a catalytic residue. A DRBM domain is found at 160–229; that stretch reads DYKTSLQEIL…AENALKALSE (70 aa).

The protein belongs to the ribonuclease III family. In terms of assembly, homodimer. The cofactor is Mg(2+).

The protein resides in the cytoplasm. The enzyme catalyses Endonucleolytic cleavage to 5'-phosphomonoester.. Its function is as follows. Digests double-stranded RNA. Involved in the processing of primary rRNA transcript to yield the immediate precursors to the large and small rRNAs (23S and 16S). Processes some mRNAs, and tRNAs when they are encoded in the rRNA operon. Processes pre-crRNA and tracrRNA of type II CRISPR loci if present in the organism. This chain is Ribonuclease 3, found in Streptococcus uberis (strain ATCC BAA-854 / 0140J).